Consider the following 473-residue polypeptide: GTPase Der (473 aa).

2 consecutive EngA-type G domains span residues 3-167 (LTIA…GKDK) and 204-379 (IRIA…RIWN). GTP contacts are provided by residues 9-16 (GRPNVGKS), 56-60 (DTAGL), 119-122 (NKSE), 210-217 (GRPNTGKS), 257-261 (DTAGL), and 322-325 (NKWD). One can recognise a KH-like domain in the interval 380–464 (RRISTGKLNR…PIRLSLRTSD (85 aa)).

It belongs to the TRAFAC class TrmE-Era-EngA-EngB-Septin-like GTPase superfamily. EngA (Der) GTPase family. In terms of assembly, associates with the 50S ribosomal subunit.

Its function is as follows. GTPase that plays an essential role in the late steps of ribosome biogenesis. The protein is GTPase Der of Bartonella bacilliformis (strain ATCC 35685 / KC583 / Herrer 020/F12,63).